The chain runs to 335 residues: Protein MET1, chloroplastic (335 aa).

The span at M1–P18 shows a compositional bias: low complexity. Disordered regions lie at residues M1–L29 and S66–T88. The transit peptide at M1–K73 directs the protein to the chloroplast. Polar residues predominate over residues R19–L29. The segment covering G78 to T88 has biased composition (acidic residues). The PDZ domain occupies Y97–S136. 3 TPR repeats span residues R217–P250, S254–D287, and K289–I323.

As to quaternary structure, interacts directly with stromal loops of photosystem II (PSII) core components psbB (CP47) and psbC (CP43). Associates with PSII subcomplexes formed during the PSII repair cycle (e.g. PSII dimers, PSII monomers, CP43-less PSII monomerand PSII reaction centers). Post-translationally, phosphorylated rapidly (e.g. within 5 minutes) but transiently at threonine and serine residues after wounding. Expressed in leaves (at protein level). Mostly expressed in leaves, stems and siliques, and, to a lower extent, in flowers and senescent leaves, but not present in roots (at protein level).

The protein localises to the plastid. It is found in the chloroplast membrane. Its subcellular location is the chloroplast thylakoid membrane. Functionally, involved in photosystem II supercomplex formation and repair, probably acting as a psbB/psbC chaperone on the stromal side of the membrane. In Arabidopsis thaliana (Mouse-ear cress), this protein is Protein MET1, chloroplastic.